Here is a 433-residue protein sequence, read N- to C-terminus: Glutamate-1-semialdehyde 2,1-aminomutase (433 aa).

Lys266 bears the N6-(pyridoxal phosphate)lysine mark.

The protein belongs to the class-III pyridoxal-phosphate-dependent aminotransferase family. HemL subfamily. In terms of assembly, homodimer. Requires pyridoxal 5'-phosphate as cofactor.

It localises to the cytoplasm. It catalyses the reaction (S)-4-amino-5-oxopentanoate = 5-aminolevulinate. It functions in the pathway porphyrin-containing compound metabolism; protoporphyrin-IX biosynthesis; 5-aminolevulinate from L-glutamyl-tRNA(Glu): step 2/2. This chain is Glutamate-1-semialdehyde 2,1-aminomutase, found in Psychrobacter arcticus (strain DSM 17307 / VKM B-2377 / 273-4).